Here is a 113-residue protein sequence, read N- to C-terminus: Venom protein 184 (113 aa).

Residues 1–21 (MKTTLIFCILGIVIPTAVVSS) form the signal peptide.

Contains 3 disulfide bonds. As to expression, expressed by the venom gland.

It is found in the secreted. This is Venom protein 184 from Lychas mucronatus (Chinese swimming scorpion).